Reading from the N-terminus, the 103-residue chain is Histone H4 (103 aa).

Gly residues predominate over residues 1 to 14; sequence MSGRGKGGKGLGKG. Residues 1-20 form a disordered region; the sequence is MSGRGKGGKGLGKGGAKRHR. An N-acetylserine modification is found at serine 2. An N6-acetyllysine modification is found at lysine 17. The DNA-binding element occupies 17–21; that stretch reads KRHRK. The residue at position 21 (lysine 21) is an N6-methyllysine.

This sequence belongs to the histone H4 family. As to quaternary structure, the nucleosome is a histone octamer containing two molecules each of H2A, H2B, H3 and H4 assembled in one H3-H4 heterotetramer and two H2A-H2B heterodimers. The octamer wraps approximately 147 bp of DNA.

It is found in the nucleus. The protein resides in the chromosome. Core component of nucleosome. Nucleosomes wrap and compact DNA into chromatin, limiting DNA accessibility to the cellular machineries which require DNA as a template. Histones thereby play a central role in transcription regulation, DNA repair, DNA replication and chromosomal stability. DNA accessibility is regulated via a complex set of post-translational modifications of histones, also called histone code, and nucleosome remodeling. This Capsicum annuum (Capsicum pepper) protein is Histone H4.